A 371-amino-acid polypeptide reads, in one-letter code: Archaeal glycosylation protein Q (371 aa).

Residues 19 to 39 (QRSDGSMPAGHNGPYHDPETP) are disordered.

It localises to the cytoplasm. It participates in cell surface structure biogenesis; S-layer biogenesis. In terms of biological role, putative isomerase involved in the N-glycosylation pathway. Required for the appearance of the methyl ester of hexuronic acid found at position four of the pentasaccharide N-linked to the S-layer glycoprotein. Either involved in preparing the third sugar for attachment of the fourth pentasaccharide subunit or processing the fourth sugar prior to its addition to the lipid-linked trisaccharide. This is Archaeal glycosylation protein Q (aglQ) from Haloferax volcanii (strain ATCC 29605 / DSM 3757 / JCM 8879 / NBRC 14742 / NCIMB 2012 / VKM B-1768 / DS2) (Halobacterium volcanii).